Consider the following 275-residue polypeptide: Membrane protein insertase MisCB (275 aa).

The signal sequence occupies residues 1 to 18; sequence MLKTYQKLLAMGIFLIVL. C19 is lipidated: N-palmitoyl cysteine. C19 carries the S-diacylglycerol cysteine lipid modification. The next 5 membrane-spanning stretches (helical) occupy residues 63-83, 139-159, 172-192, 219-239, and 240-260; these read YGLSIILVTIIVRIVVLPLFV, AMGCLPMLIQSPIMIGLYYAI, WFSLGQSDILMSLSAGIMYFV, LMVFIFPVMMTIFSLNVPAAL, and PLYWFTSGLFLTVQNIVLQMT.

It belongs to the OXA1/ALB3/YidC family. Type 2 subfamily. As to quaternary structure, mostly monomeric, it may also form dimers. Interacts with SpoIIIAE. Forms a complex with the F(1)F(0) ATP synthase in which can be found the alpha, beta, gamma, delta and epsilon subunits of F(1) and a, b and subunits of F(0). YqgA is found in the same complex.

It is found in the cell membrane. Its function is as follows. Required for the insertion and/or proper folding and/or complex formation of integral membrane proteins into the membrane. Involved in integration of membrane proteins that insert both dependently and independently of the Sec translocase complex, as well as at least some lipoproteins. Also involved in protein secretion processes. It has an overlapping, although partly distinct, function compared to SpoIIIJ(MisCB). This is Membrane protein insertase MisCB (misCB) from Bacillus subtilis (strain 168).